We begin with the raw amino-acid sequence, 395 residues long: Aspergillopepsin-1 (395 aa).

The N-terminal stretch at 1–20 (MVVFSKVTAVVVGLSTIVSA) is a signal peptide. A propeptide spans 21 to 70 (VPVVQPRKGFTINQVARPVTNKKTVNLPAVYANALTKYGGTVPDSVKAAA) (activation peptide). Residues 86-392 (YLTPVKVGGT…DSQGPRLGFA (307 aa)) form the Peptidase A1 domain. Residues aspartate 102 and aspartate 284 contribute to the active site. An intrachain disulfide couples cysteine 320 to cysteine 355.

Belongs to the peptidase A1 family. In terms of assembly, monomer.

It localises to the secreted. It carries out the reaction Hydrolysis of proteins with broad specificity. Generally favors hydrophobic residues in P1 and P1', but also accepts Lys in P1, which leads to activation of trypsinogen. Does not clot milk.. Functionally, secreted aspartic endopeptidase that allows assimilation of proteinaceous substrates. The scissile peptide bond is attacked by a nucleophilic water molecule activated by two aspartic residues in the active site. Shows a broad primary substrate specificity. Favors hydrophobic residues at the P1 and P1' positions, but also accepts a lysine residue in the P1 position, leading to the activation of trypsinogen and chymotrypsinogen A. The sequence is that of Aspergillopepsin-1 (pepA) from Aspergillus fumigatus (strain CBS 144.89 / FGSC A1163 / CEA10) (Neosartorya fumigata).